The following is a 308-amino-acid chain: 3'(2'),5'-bisphosphate nucleotidase 1 (308 aa).

N-acetylalanine is present on A2. D51 acts as the Proton acceptor in catalysis. 4 residues coordinate Mg(2+): E74, D117, L119, and D120. T122 serves as the catalytic Proton acceptor. T122 carries the post-translational modification Phosphothreonine. T195, H198, G220, and K224 together coordinate AMP. Residue S240 is modified to Phosphoserine. Residue K244 is modified to N6-succinyllysine. Position 247 (D247) interacts with Mg(2+).

The protein belongs to the inositol monophosphatase superfamily. It depends on Mg(2+) as a cofactor. Widely expressed. Highly expressed in kidney.

It catalyses the reaction adenosine 3',5'-bisphosphate + H2O = AMP + phosphate. The catalysed reaction is adenosine 2',5'-bisphosphate + H2O = AMP + phosphate. The enzyme catalyses 3'-phosphoadenylyl sulfate + H2O = adenosine 5'-phosphosulfate + phosphate. It carries out the reaction 1D-myo-inositol 1,4-bisphosphate + H2O = 1D-myo-inositol 4-phosphate + phosphate. It catalyses the reaction 1D-myo-inositol 1,3,4-trisphosphate + H2O = 1D-myo-inositol 3,4-bisphosphate + phosphate. Its activity is regulated as follows. Uncompetitively inhibited by Li(+) (IC(50)=157 uM). PAP hydrolysis is competitively inhibited by PAPS (IC(50)=0.7 uM) and by inositol 1,4-bisphosphate (IC(50)=15 uM). Phosphatase that converts 3'(2')-phosphoadenosine 5'-phosphate (PAP) to AMP and adenosine 3'-phosphate 5'-phosphosulfate (PAPS) to adenosine 5'-phosphosulfate (APS). Is also able to hydrolyze inositol 1,4-bisphosphate (Ins(1,4)P2) and inositol 1,3,4-trisphosphate (Ins(1,3,4)P3), and is not active on Ins(1)P, Ins(4)P, Ins(3,4)P2, Ins(1,4,5)P3, Ins(1,3,4,5)P4, Ins(1,3,4,5,6)P5 or InsP6. Probably prevents the toxic accumulation of PAP, a compound which inhibits a variety of proteins, including PAPS-utilizing enzymes such as sulfotransferases, and RNA processing enzymes. Could also play a role in inositol recycling and phosphoinositide metabolism. This chain is 3'(2'),5'-bisphosphate nucleotidase 1 (Bpnt1), found in Mus musculus (Mouse).